A 125-amino-acid polypeptide reads, in one-letter code: Large ribosomal subunit protein bL17 (125 aa).

This sequence belongs to the bacterial ribosomal protein bL17 family. Part of the 50S ribosomal subunit. Contacts protein L32.

The polypeptide is Large ribosomal subunit protein bL17 (Blochmanniella floridana).